Here is a 28-residue protein sequence, read N- to C-terminus: Apolipoprotein C-I (28 aa).

Belongs to the apolipoprotein C1 family.

The protein localises to the secreted. Inhibitor of lipoprotein binding to the low density lipoprotein (LDL) receptor, LDL receptor-related protein, and very low density lipoprotein (VLDL) receptor. Associates with high density lipoproteins (HDL) and the triacylglycerol-rich lipoproteins in the plasma and makes up about 10% of the protein of the VLDL and 2% of that of HDL. Appears to interfere directly with fatty acid uptake and is also the major plasma inhibitor of cholesteryl ester transfer protein (CETP). Binds free fatty acids and reduces their intracellular esterification. Modulates the interaction of APOE with beta-migrating VLDL and inhibits binding of beta-VLDL to the LDL receptor-related protein. This Oryctolagus cuniculus (Rabbit) protein is Apolipoprotein C-I (APOC1).